We begin with the raw amino-acid sequence, 366 residues long: Fe-S cluster assembly protein DRE2 (366 aa).

An N-terminal SAM-like domain region spans residues 8-167 (AQGSGRFLLL…KPDFGAQQAV (160 aa)). The interval 100–136 (RNRDNQIWGSGSDSAAGLGSSDGGGGGGGGEKKSSSE) is disordered. A compositionally biased stretch (low complexity) spans 108 to 118 (GSGSDSAAGLG). Positions 119 to 128 (SSDGGGGGGG) are enriched in gly residues. A linker region spans residues 168-258 (PLKLGRKKNL…EEELLGEFDM (91 aa)). Residues cysteine 268, cysteine 279, cysteine 282, and cysteine 284 each contribute to the [2Fe-2S] cluster site. The interval 268–284 (CRPKAGKRRRACKDCTC) is fe-S binding site A. [4Fe-4S] cluster-binding residues include cysteine 329, cysteine 332, cysteine 340, and cysteine 343. 2 consecutive short sequence motifs (cx2C motif) follow at residues 329–332 (CGNC) and 340–343 (CDGC). Residues 329-343 (CGNCALGDAFRCDGC) form a fe-S binding site B region.

Belongs to the anamorsin family. Monomer. Interacts with TAH18. Interacts with MIA40. [2Fe-2S] cluster serves as cofactor. Requires [4Fe-4S] cluster as cofactor.

The protein resides in the cytoplasm. It localises to the mitochondrion intermembrane space. Component of the cytosolic iron-sulfur (Fe-S) protein assembly (CIA) machinery required for the maturation of extramitochondrial Fe-S proteins. Part of an electron transfer chain functioning in an early step of cytosolic Fe-S biogenesis, facilitating the de novo assembly of a [4Fe-4S] cluster on the scaffold complex CFD1-NBP35. Electrons are transferred to DRE2 from NADPH via the FAD- and FMN-containing protein TAH18. TAH18-DRE2 are also required for the assembly of the diferric tyrosyl radical cofactor of ribonucleotide reductase (RNR), probably by providing electrons for reduction during radical cofactor maturation in the catalytic small subunit RNR2. In Paracoccidioides lutzii (strain ATCC MYA-826 / Pb01) (Paracoccidioides brasiliensis), this protein is Fe-S cluster assembly protein DRE2.